The primary structure comprises 151 residues: Histone H2A.2.2 (151 aa).

An N-acetylmethionine modification is found at methionine 1. The tract at residues 129-151 is disordered; the sequence is EKAEKAGTKAKSPKKATKSPKKA. Basic residues predominate over residues 139 to 151; it reads KSPKKATKSPKKA. 2 consecutive short sequence motifs (SPKK motif) follow at residues 140–143 and 147–150; these read SPKK.

The protein belongs to the histone H2A family. In terms of assembly, the nucleosome is a histone octamer containing two molecules each of H2A, H2B, H3 and H4 assembled in one H3-H4 heterotetramer and two H2A-H2B heterodimers. The octamer wraps approximately 147 bp of DNA. Post-translationally, phosphorylated within its C-terminal part, probably at the SPKK motifs.

It is found in the nucleus. The protein localises to the chromosome. In terms of biological role, core component of nucleosome. Nucleosomes wrap and compact DNA into chromatin, limiting DNA accessibility to the cellular machineries which require DNA as a template. Histones thereby play a central role in transcription regulation, DNA repair, DNA replication and chromosomal stability. DNA accessibility is regulated via a complex set of post-translational modifications of histones, also called histone code, and nucleosome remodeling. The chain is Histone H2A.2.2 from Triticum aestivum (Wheat).